Consider the following 165-residue polypeptide: Nascent polypeptide-associated complex subunit alpha (165 aa).

The 65-residue stretch at 14–78 (NRNEKKAREL…AKVDNFTQRL (65 aa)) folds into the NAC-A/B domain. One can recognise a UBA domain in the interval 126–165 (LSNDDIDLVVQQTNATKGQAIKALKEHNGDIVNAIMSLSK).

Belongs to the NAC-alpha family. As to quaternary structure, part of the nascent polypeptide-associated complex (NAC), consisting of EGD2 and EGD1. NAC associates with ribosomes via EGD1.

It is found in the cytoplasm. It localises to the nucleus. Its function is as follows. Component of the nascent polypeptide-associated complex (NAC), a dynamic component of the ribosomal exit tunnel, protecting the emerging polypeptides from interaction with other cytoplasmic proteins to ensure appropriate nascent protein targeting. The NAC complex also promotes mitochondrial protein import by enhancing productive ribosome interactions with the outer mitochondrial membrane and blocks the inappropriate interaction of ribosomes translating non-secretory nascent polypeptides with translocation sites in the membrane of the endoplasmic reticulum. EGD2 may also be involved in transcription regulation. This chain is Nascent polypeptide-associated complex subunit alpha (EGD2), found in Candida glabrata (strain ATCC 2001 / BCRC 20586 / JCM 3761 / NBRC 0622 / NRRL Y-65 / CBS 138) (Yeast).